Here is a 356-residue protein sequence, read N- to C-terminus: NADH-quinone oxidoreductase subunit H (356 aa).

8 consecutive transmembrane segments (helical) span residues 18-38 (IVMI…IAYI), 87-107 (GVFL…WAVI), 120-140 (VGIL…IMAG), 166-186 (IGFV…SAVV), 205-225 (ILNW…VSAL), 265-285 (AITT…LPPI), 292-312 (WVPG…LIAM), and 333-353 (FLPL…FAGI).

This sequence belongs to the complex I subunit 1 family. NDH-1 is composed of 14 different subunits. Subunits NuoA, H, J, K, L, M, N constitute the membrane sector of the complex.

Its subcellular location is the cell inner membrane. It catalyses the reaction a quinone + NADH + 5 H(+)(in) = a quinol + NAD(+) + 4 H(+)(out). NDH-1 shuttles electrons from NADH, via FMN and iron-sulfur (Fe-S) centers, to quinones in the respiratory chain. The immediate electron acceptor for the enzyme in this species is believed to be ubiquinone. Couples the redox reaction to proton translocation (for every two electrons transferred, four hydrogen ions are translocated across the cytoplasmic membrane), and thus conserves the redox energy in a proton gradient. This subunit may bind ubiquinone. The polypeptide is NADH-quinone oxidoreductase subunit H (Bradyrhizobium sp. (strain BTAi1 / ATCC BAA-1182)).